Here is a 283-residue protein sequence, read N- to C-terminus: Bifunctional protein FolD (283 aa).

Residues 165–167 (GRS), S190, and I231 contribute to the NADP(+) site.

The protein belongs to the tetrahydrofolate dehydrogenase/cyclohydrolase family. Homodimer.

The catalysed reaction is (6R)-5,10-methylene-5,6,7,8-tetrahydrofolate + NADP(+) = (6R)-5,10-methenyltetrahydrofolate + NADPH. It carries out the reaction (6R)-5,10-methenyltetrahydrofolate + H2O = (6R)-10-formyltetrahydrofolate + H(+). Its pathway is one-carbon metabolism; tetrahydrofolate interconversion. Catalyzes the oxidation of 5,10-methylenetetrahydrofolate to 5,10-methenyltetrahydrofolate and then the hydrolysis of 5,10-methenyltetrahydrofolate to 10-formyltetrahydrofolate. The sequence is that of Bifunctional protein FolD from Janthinobacterium sp. (strain Marseille) (Minibacterium massiliensis).